Consider the following 71-residue polypeptide: Protein DP71L (71 aa).

2 important for host CHOP inhibition regions span residues 16–18 and 57–61; these read VRF and LSAVL.

The protein belongs to the asfivirus DP71L family. As to quaternary structure, interacts (via C-terminus) with host PPP1CB.

Its function is as follows. Interacts with the host phosphatase PP1 catalytic subunit (PPP1CB) and recruits it to dephosphorylate EIF2S1/eIF2alpha and therefore restores the host translation that has been shut-down by the host. Also inhibits the EIF2S1/eIF2alpha-ATF4-DDIT3/CHOP pathway. The chain is Protein DP71L from Ornithodoros (relapsing fever ticks).